A 171-amino-acid chain; its full sequence is Transcriptional repressor NrdR (171 aa).

A zinc finger lies at 3-34 (CPFCGDPNTQVADTRENEGGEVVRRRRRCPKC). Positions 49–139 (PHIVKRNGNR…VYRNFADVDE (91 aa)) constitute an ATP-cone domain. The disordered stretch occupies residues 148-171 (KARPKRNRPAEPPEPTSENDLFRS).

The protein belongs to the NrdR family. Zn(2+) is required as a cofactor.

Functionally, negatively regulates transcription of bacterial ribonucleotide reductase nrd genes and operons by binding to NrdR-boxes. The protein is Transcriptional repressor NrdR of Aromatoleum aromaticum (strain DSM 19018 / LMG 30748 / EbN1) (Azoarcus sp. (strain EbN1)).